Reading from the N-terminus, the 252-residue chain is ATP synthase subunit a (252 aa).

Helical transmembrane passes span 33 to 53, 92 to 112, 130 to 150, 196 to 216, and 217 to 237; these read GQVF…AFVA, VPFV…GALV, DINT…YAGL, LVVS…VMVL, and GLFT…TYIG.

This sequence belongs to the ATPase A chain family. In terms of assembly, F-type ATPases have 2 components, CF(1) - the catalytic core - and CF(0) - the membrane proton channel. CF(1) has five subunits: alpha(3), beta(3), gamma(1), delta(1), epsilon(1). CF(0) has four main subunits: a, b, b' and c.

It is found in the cellular thylakoid membrane. Key component of the proton channel; it plays a direct role in the translocation of protons across the membrane. The chain is ATP synthase subunit a from Thermosynechococcus vestitus (strain NIES-2133 / IAM M-273 / BP-1).